The following is a 669-amino-acid chain: Thrombospondin-type laminin G domain and EAR repeat-containing protein (669 aa).

The N-terminal stretch at 1–19 (MSALLSLCFVLPLAAPGHG) is a signal peptide. In terms of domain architecture, Laminin G-like spans 58–277 (GLQLSVAAPR…RVTLGPQPPC (220 aa)). EAR repeat units follow at residues 313–358 (DYVE…KWTE), 360–408 (KFVS…KWSH), 412–460 (KFTP…KWNP), 464–506 (LFEA…VHSH), 514–570 (SFQL…ELNV), 574–622 (AFVK…RWQG), and 625–668 (GFVA…RLRT). Asn-320 carries an N-linked (GlcNAc...) asparagine glycan. N-linked (GlcNAc...) asparagine glycans are attached at residues Asn-468, Asn-497, Asn-556, and Asn-569.

The protein localises to the secreted. It localises to the cell surface. Its subcellular location is the cell projection. It is found in the stereocilium. Functionally, plays a critical role in tooth and hair follicle morphogenesis through regulation of the Notch signaling pathway. May play a role in development or function of the auditory system. The polypeptide is Thrombospondin-type laminin G domain and EAR repeat-containing protein (TSPEAR) (Homo sapiens (Human)).